Consider the following 364-residue polypeptide: BTB/POZ and TAZ domain-containing protein 2 (364 aa).

Residues 34-106 (SDVEIVTSDN…LYSSSLTEDE (73 aa)) enclose the BTB domain. The Nuclear localization signal motif lies at 203–212 (RKKRRRRHRK). A TAZ-type zinc finger spans residues 215–316 (DLYMQLSEAM…PDSCRVPLCR (102 aa)). Positions 327–350 (KMGEDTKWKLLVTRVVSAKAMTSL) are caM-binding.

Interacts with CUL3A. Interacts with GTE11/BET10 through the BTB domain. As to expression, preferentially expressed in young leaves and roots.

Its subcellular location is the nucleus. It localises to the cytoplasm. The protein operates within protein modification; protein ubiquitination. Functionally, may act as a substrate-specific adapter of an E3 ubiquitin-protein ligase complex (CUL3-RBX1-BTB) which mediates the ubiquitination and subsequent proteasomal degradation of target proteins. Plays a key role as a component of the TAC1-mediated telomerase activation pathway certainly by targeting a telomerase repressor to degradation. Seems to occupy an integral position in a complex signaling network that perceives, integrates, and responds to multiple, and sometimes competing, signals. Enhances responses to auxin in postgermination and vegetative development. Also negatively regulates ABA- and sugar-mediated inhibition of the germination. Essential for female and male gametophyte development. This chain is BTB/POZ and TAZ domain-containing protein 2 (BT2), found in Arabidopsis thaliana (Mouse-ear cress).